The sequence spans 240 residues: NADH-quinone oxidoreductase subunit I 2 (240 aa).

2 4Fe-4S ferredoxin-type domains span residues 57–86 (TDLR…IEWH) and 97–126 (DRFA…MGYD). Residues cysteine 66, cysteine 69, cysteine 72, cysteine 76, cysteine 106, cysteine 109, cysteine 112, and cysteine 116 each contribute to the [4Fe-4S] cluster site. Positions 185-240 (IHGYLGRPPLPKGYEPELKPQFRKPAEEAAEAQQAEAAGQPAAEPGKTNGEEAGQP) are disordered. The span at 198-211 (YEPELKPQFRKPAE) shows a compositional bias: basic and acidic residues. The span at 215–230 (EAQQAEAAGQPAAEPG) shows a compositional bias: low complexity.

This sequence belongs to the complex I 23 kDa subunit family. As to quaternary structure, NDH-1 is composed of 14 different subunits. Subunits NuoA, H, J, K, L, M, N constitute the membrane sector of the complex. [4Fe-4S] cluster serves as cofactor.

It is found in the cell membrane. It carries out the reaction a quinone + NADH + 5 H(+)(in) = a quinol + NAD(+) + 4 H(+)(out). In terms of biological role, NDH-1 shuttles electrons from NADH, via FMN and iron-sulfur (Fe-S) centers, to quinones in the respiratory chain. The immediate electron acceptor for the enzyme in this species is believed to be ubiquinone. Couples the redox reaction to proton translocation (for every two electrons transferred, four hydrogen ions are translocated across the cytoplasmic membrane), and thus conserves the redox energy in a proton gradient. This chain is NADH-quinone oxidoreductase subunit I 2, found in Symbiobacterium thermophilum (strain DSM 24528 / JCM 14929 / IAM 14863 / T).